Here is a 2694-residue protein sequence, read N- to C-terminus: Neurobeachin-like protein 1 (2694 aa).

Disordered regions lie at residues Val1289–Glu1314, Ser1330–Val1350, and Cys1381–Ser1411. Positions Leu1290–Glu1314 are enriched in basic and acidic residues. The segment covering Met1383 to Val1409 has biased composition (polar residues). Residues Asp1883–Leu1980 form the BEACH-type PH domain. Residues Arg1992–Arg2284 form the BEACH domain. 2 WD repeats span residues Arg2439–Val2478 and Gly2490–Arg2531.

The protein belongs to the WD repeat neurobeachin family. In terms of tissue distribution, highly expressed in brain, kidney, prostate and testis. Weakly expressed in ovary, small intestine, colon and peripheral blood leukocytes. May be correlative to several tumors, such as ovary serous adenocarcinoma and metastasis mammary gland carcinoma breast.

The chain is Neurobeachin-like protein 1 (NBEAL1) from Homo sapiens (Human).